The sequence spans 169 residues: Photosystem I assembly protein Ycf3 (169 aa).

3 TPR repeats span residues 35 to 68 (AFTY…EIDP), 72 to 105 (SYIL…NPSL), and 120 to 153 (GEQA…APGN).

This sequence belongs to the Ycf3 family.

The protein resides in the plastid. It localises to the chloroplast thylakoid membrane. Its function is as follows. Essential for the assembly of the photosystem I (PSI) complex. May act as a chaperone-like factor to guide the assembly of the PSI subunits. The protein is Photosystem I assembly protein Ycf3 of Huperzia lucidula (Shining clubmoss).